A 126-amino-acid polypeptide reads, in one-letter code: Large ribosomal subunit protein bL17 (126 aa).

Belongs to the bacterial ribosomal protein bL17 family. As to quaternary structure, part of the 50S ribosomal subunit. Contacts protein L32.

In Vibrio atlanticus (strain LGP32) (Vibrio splendidus (strain Mel32)), this protein is Large ribosomal subunit protein bL17.